The following is a 178-amino-acid chain: Alkyl hydroperoxide reductase AhpD (178 aa).

Cys130 (proton donor) is an active-site residue. An intrachain disulfide couples Cys130 to Cys133. The active-site Cysteine sulfenic acid (-SOH) intermediate is the Cys133.

It belongs to the AhpD family. In terms of assembly, homotrimer.

The enzyme catalyses N(6)-[(R)-dihydrolipoyl]-L-lysyl-[lipoyl-carrier protein] + a hydroperoxide = N(6)-[(R)-lipoyl]-L-lysyl-[lipoyl-carrier protein] + an alcohol + H2O. Functionally, antioxidant protein with alkyl hydroperoxidase activity. Required for the reduction of the AhpC active site cysteine residues and for the regeneration of the AhpC enzyme activity. The protein is Alkyl hydroperoxide reductase AhpD of Mycobacterium marinum (strain ATCC BAA-535 / M).